The chain runs to 338 residues: Ketol-acid reductoisomerase (NADP(+)) (338 aa).

Residues 1 to 181 (MRVYYDKDCD…GGGRSGIIET (181 aa)) form the KARI N-terminal Rossmann domain. NADP(+) is bound by residues 24-27 (YGSQ), arginine 47, serine 50, serine 52, and 82-85 (DENQ). Residue histidine 107 is part of the active site. Glycine 133 provides a ligand contact to NADP(+). Residues 182-327 (TFKDETETDL…EKLRGMMPWI (146 aa)) form the KARI C-terminal knotted domain. Aspartate 190, glutamate 194, glutamate 226, and glutamate 230 together coordinate Mg(2+). Residue serine 251 participates in substrate binding.

This sequence belongs to the ketol-acid reductoisomerase family. The cofactor is Mg(2+).

It catalyses the reaction (2R)-2,3-dihydroxy-3-methylbutanoate + NADP(+) = (2S)-2-acetolactate + NADPH + H(+). The catalysed reaction is (2R,3R)-2,3-dihydroxy-3-methylpentanoate + NADP(+) = (S)-2-ethyl-2-hydroxy-3-oxobutanoate + NADPH + H(+). Its pathway is amino-acid biosynthesis; L-isoleucine biosynthesis; L-isoleucine from 2-oxobutanoate: step 2/4. The protein operates within amino-acid biosynthesis; L-valine biosynthesis; L-valine from pyruvate: step 2/4. In terms of biological role, involved in the biosynthesis of branched-chain amino acids (BCAA). Catalyzes an alkyl-migration followed by a ketol-acid reduction of (S)-2-acetolactate (S2AL) to yield (R)-2,3-dihydroxy-isovalerate. In the isomerase reaction, S2AL is rearranged via a Mg-dependent methyl migration to produce 3-hydroxy-3-methyl-2-ketobutyrate (HMKB). In the reductase reaction, this 2-ketoacid undergoes a metal-dependent reduction by NADPH to yield (R)-2,3-dihydroxy-isovalerate. In Chromohalobacter salexigens (strain ATCC BAA-138 / DSM 3043 / CIP 106854 / NCIMB 13768 / 1H11), this protein is Ketol-acid reductoisomerase (NADP(+)).